The primary structure comprises 346 residues: MVRFEGISKTYPAYRGKPGVNALQDIDFAIPRGSITGVIGRSGAGKSSLVRLINGLEKPTTGRVIVDNKDISALAGRELRLAQRSIGMIFQHFNLLSSRTAADNIALPLEIAGWARADIKARVAELLALVGIADKHDRYPSELSGGQKQRVGIARALATRPSVLLSDEATSALDPQTTRAILDLLANINRELGVTIVLITHEMSVVRQLAREVVVLDAGHVVESGHVADIFTHPKHPITQSFLAEVVGDSLPVSLASRIVSEPSAGGQAVIRVQVRGAGAGDTVVARLARELGLDVALLAARIDEIGGQHVGSLVLGVPGSEDVQARVLAWLSQYQFPAERLGYVA.

The ABC transporter domain maps to 2 to 243 (VRFEGISKTY…PKHPITQSFL (242 aa)). 40–47 (GRSGAGKS) provides a ligand contact to ATP.

The protein belongs to the ABC transporter superfamily. Methionine importer (TC 3.A.1.24) family. As to quaternary structure, the complex is composed of two ATP-binding proteins (MetN), two transmembrane proteins (MetI) and a solute-binding protein (MetQ).

The protein localises to the cell inner membrane. It carries out the reaction L-methionine(out) + ATP + H2O = L-methionine(in) + ADP + phosphate + H(+). The catalysed reaction is D-methionine(out) + ATP + H2O = D-methionine(in) + ADP + phosphate + H(+). Functionally, part of the ABC transporter complex MetNIQ involved in methionine import. Responsible for energy coupling to the transport system. The polypeptide is Methionine import ATP-binding protein MetN (Bradyrhizobium diazoefficiens (strain JCM 10833 / BCRC 13528 / IAM 13628 / NBRC 14792 / USDA 110)).